We begin with the raw amino-acid sequence, 138 residues long: Gamma-glutamylaminecyclotransferase (138 aa).

Glu63 serves as the catalytic Proton acceptor.

Belongs to the gamma-glutamylcyclotransferase family.

The enzyme catalyses epsilon-(gamma-L-glutamyl)-L-lysine = 5-oxo-L-proline + L-lysine. May contribute to degradation of proteins cross-linked by transglutaminases by degrading the cross-link between a lysine and a glutamic acid residue. Catalyzes the formation of 5-oxo-L-proline from L-gamma-glutamyl-L-epsilon-lysine. This is Gamma-glutamylaminecyclotransferase (ggact) from Xenopus laevis (African clawed frog).